We begin with the raw amino-acid sequence, 510 residues long: MIWHVQNENFILDSTRIFMKAFHLLLFHGSFIFPECILIFGLILLLMIDSTSDQKDRPWFYFISSTSLVMSITALLFRWKEEPIISFSGNFQTNNFNEIFQFLILLCSTLCIPLSVEYIECTEMAITEFLLFVLTATLGGMFLCGANDLITIFVAPECFSLCSYLLSGYTKRDVRSNEATTKYLLMGGASSSILVHGFSWLYGLSGGEIELQEIVNGLINTQMYNSPGISIALISITVGIGFKLSPAPFHQWTPDVYEGSPTPVVAFLSVTSKVAASASATRIFDIPFYFSSNEWHLLLEILAILSMILGNLIAITQTSMKRMLAYSSIGQIGYVIIGIIVGDSNDGYASMITYMLFYISMNLGTFARIVSFGLRTGTDNIRDYAGLYTKDPFLALSLALCLLSLGGLPPLAGFFGKLHLFWCGWQAGLYFLVSIGLLTSVVSIYYYLKIIKLLMTGRNQEITPHVRNYRRSPLRSNNSIEWSMTVCVIASTIPGISMNPILAIAQDTLF.

The next 12 helical transmembrane spans lie at 24 to 44, 59 to 79, 99 to 119, 124 to 144, 149 to 169, 184 to 204, 229 to 249, 295 to 315, 323 to 343, 347 to 367, 395 to 415, and 418 to 438; these read LLLFHGSFIFPECILIFGLIL, WFYFISSTSLVMSITALLFRW, IFQFLILLCSTLCIPLSVEYI, MAITEFLLFVLTATLGGMFLC, LITIFVAPECFSLCSYLLSGY, LLMGGASSSILVHGFSWLYGL, ISIALISITVGIGFKLSPAPF, WHLLLEILAILSMILGNLIAI, MLAYSSIGQIGYVIIGIIVGD, GYASMITYMLFYISMNLGTFA, ALSLALCLLSLGGLPPLAGFF, and LHLFWCGWQAGLYFLVSIGLL.

It belongs to the complex I subunit 2 family. NDH is composed of at least 16 different subunits, 5 of which are encoded in the nucleus.

The protein localises to the plastid. It localises to the chloroplast thylakoid membrane. It catalyses the reaction a plastoquinone + NADH + (n+1) H(+)(in) = a plastoquinol + NAD(+) + n H(+)(out). The enzyme catalyses a plastoquinone + NADPH + (n+1) H(+)(in) = a plastoquinol + NADP(+) + n H(+)(out). Its function is as follows. NDH shuttles electrons from NAD(P)H:plastoquinone, via FMN and iron-sulfur (Fe-S) centers, to quinones in the photosynthetic chain and possibly in a chloroplast respiratory chain. The immediate electron acceptor for the enzyme in this species is believed to be plastoquinone. Couples the redox reaction to proton translocation, and thus conserves the redox energy in a proton gradient. The sequence is that of NAD(P)H-quinone oxidoreductase subunit 2, chloroplastic from Muilla maritima (Sea muilla).